Reading from the N-terminus, the 471-residue chain is Cell division protein FtsP (471 aa).

Positions 1–27 form a signal peptide, tat-type signal; it reads MSLSRRSFLQASGVALAAGALPLKAEA. The 60-residue stretch at 229–288 folds into the Plastocyanin-like domain; it reads VRLRLLNASNARRYELSMTDNRAFHVVASDLGFLPAPMTVKRLSLGPGERREVLVDMSQG.

This sequence belongs to the FtsP family. In terms of processing, predicted to be exported by the Tat system. The position of the signal peptide cleavage has not been experimentally proven.

The protein localises to the periplasm. Its function is as follows. Cell division protein that is required for growth during stress conditions. May be involved in protecting or stabilizing the divisomal assembly under conditions of stress. The chain is Cell division protein FtsP from Rahnella sp. (strain Y9602).